We begin with the raw amino-acid sequence, 426 residues long: Mitochondrial distribution and morphology protein 12 (426 aa).

An SMP-LTD domain is found at 1–426 (MSIEVDWKTA…VFPSFWTFLI (426 aa)). Disordered stretches follow at residues 88–147 (AHGN…GTPG), 185–264 (WTDH…FRFP), and 346–370 (ADDQ…SPKR). Over residues 96 to 109 (THSELNEPPYRDEV) the composition is skewed to basic and acidic residues. A compositionally biased stretch (low complexity) spans 216–236 (SSNPTSRPSTSSTLPSHPSGS). 2 stretches are compositionally biased toward basic and acidic residues: residues 244-264 (SHPE…FRFP) and 349-360 (QETRDKDDHPRS).

This sequence belongs to the MDM12 family. In terms of assembly, component of the ER-mitochondria encounter structure (ERMES) or MDM complex, composed of mmm1, mdm10, mdm12 and mdm34. A mmm1 homodimer associates with one molecule of mdm12 on each side in a pairwise head-to-tail manner, and the SMP-LTD domains of mmm1 and mdm12 generate a continuous hydrophobic tunnel for phospholipid trafficking.

Its subcellular location is the mitochondrion outer membrane. It localises to the endoplasmic reticulum membrane. Its function is as follows. Component of the ERMES/MDM complex, which serves as a molecular tether to connect the endoplasmic reticulum (ER) and mitochondria. Components of this complex are involved in the control of mitochondrial shape and protein biogenesis, and function in nonvesicular lipid trafficking between the ER and mitochondria. Mdm12 is required for the interaction of the ER-resident membrane protein mmm1 and the outer mitochondrial membrane-resident beta-barrel protein mdm10. The mdm12-mmm1 subcomplex functions in the major beta-barrel assembly pathway that is responsible for biogenesis of all mitochondrial outer membrane beta-barrel proteins, and acts in a late step after the SAM complex. The mdm10-mdm12-mmm1 subcomplex further acts in the TOM40-specific pathway after the action of the mdm12-mmm1 complex. Essential for establishing and maintaining the structure of mitochondria and maintenance of mtDNA nucleoids. The polypeptide is Mitochondrial distribution and morphology protein 12 (Aspergillus terreus (strain NIH 2624 / FGSC A1156)).